Reading from the N-terminus, the 361-residue chain is Phospho-N-acetylmuramoyl-pentapeptide-transferase (361 aa).

A run of 10 helical transmembrane segments spans residues 25–45, 71–91, 94–114, 133–153, 169–189, 200–220, 240–260, 264–284, 289–309, and 338–358; these read TGGA…WIID, TPTM…VLWA, LNPY…VGFY, WRLL…VRLG, VAIN…VGAG, GLAI…SYLA, LSVL…FNAP, IFMG…IAVA, IVLA…IVQV, and QIVI…LSTL.

It belongs to the glycosyltransferase 4 family. MraY subfamily. Requires Mg(2+) as cofactor.

The protein resides in the cell inner membrane. It catalyses the reaction UDP-N-acetyl-alpha-D-muramoyl-L-alanyl-gamma-D-glutamyl-meso-2,6-diaminopimeloyl-D-alanyl-D-alanine + di-trans,octa-cis-undecaprenyl phosphate = di-trans,octa-cis-undecaprenyl diphospho-N-acetyl-alpha-D-muramoyl-L-alanyl-D-glutamyl-meso-2,6-diaminopimeloyl-D-alanyl-D-alanine + UMP. It functions in the pathway cell wall biogenesis; peptidoglycan biosynthesis. Its function is as follows. Catalyzes the initial step of the lipid cycle reactions in the biosynthesis of the cell wall peptidoglycan: transfers peptidoglycan precursor phospho-MurNAc-pentapeptide from UDP-MurNAc-pentapeptide onto the lipid carrier undecaprenyl phosphate, yielding undecaprenyl-pyrophosphoryl-MurNAc-pentapeptide, known as lipid I. The protein is Phospho-N-acetylmuramoyl-pentapeptide-transferase of Rhodopseudomonas palustris (strain BisB18).